The following is a 483-amino-acid chain: Membrane-bound lytic murein transglycosylase F (483 aa).

Residues 1–18 (MKGLVIRISVALALLLWA) form the signal peptide. The interval 19 to 270 (VDMVFPWQQI…RIEEKYFSHI (252 aa)) is non-LT domain. The tract at residues 272–483 (QFDYVDIKSY…IMITPQNSQD (212 aa)) is LT domain. Glutamate 315 is a catalytic residue.

In the N-terminal section; belongs to the bacterial solute-binding protein 3 family. This sequence in the C-terminal section; belongs to the transglycosylase Slt family.

It localises to the cell outer membrane. It carries out the reaction Exolytic cleavage of the (1-&gt;4)-beta-glycosidic linkage between N-acetylmuramic acid (MurNAc) and N-acetylglucosamine (GlcNAc) residues in peptidoglycan, from either the reducing or the non-reducing ends of the peptidoglycan chains, with concomitant formation of a 1,6-anhydrobond in the MurNAc residue.. Murein-degrading enzyme that degrades murein glycan strands and insoluble, high-molecular weight murein sacculi, with the concomitant formation of a 1,6-anhydromuramoyl product. Lytic transglycosylases (LTs) play an integral role in the metabolism of the peptidoglycan (PG) sacculus. Their lytic action creates space within the PG sacculus to allow for its expansion as well as for the insertion of various structures such as secretion systems and flagella. This is Membrane-bound lytic murein transglycosylase F from Actinobacillus succinogenes (strain ATCC 55618 / DSM 22257 / CCUG 43843 / 130Z).